Consider the following 115-residue polypeptide: Large ribosomal subunit protein P2z (115 aa).

The tract at residues 62-115 (LASVPSGGGGGVAVASATSGGGGGGGAPAAESKKEEKKEEKEESDDDMGFSLFE) is disordered. Positions 92–102 (ESKKEEKKEEK) are enriched in basic and acidic residues. The residue at position 105 (S105) is a Phosphoserine.

This sequence belongs to the eukaryotic ribosomal protein P1/P2 family. In terms of assembly, P1 and P2 exist as dimers at the large ribosomal subunit. Post-translationally, phosphorylated.

Plays an important role in the elongation step of protein synthesis. In Arabidopsis thaliana (Mouse-ear cress), this protein is Large ribosomal subunit protein P2z (RPP2A).